The chain runs to 239 residues: 1-(5-phosphoribosyl)-5-[(5-phosphoribosylamino)methylideneamino] imidazole-4-carboxamide isomerase (239 aa).

The Proton acceptor role is filled by D8. The Proton donor role is filled by D129.

It belongs to the HisA/HisF family.

Its subcellular location is the cytoplasm. The catalysed reaction is 1-(5-phospho-beta-D-ribosyl)-5-[(5-phospho-beta-D-ribosylamino)methylideneamino]imidazole-4-carboxamide = 5-[(5-phospho-1-deoxy-D-ribulos-1-ylimino)methylamino]-1-(5-phospho-beta-D-ribosyl)imidazole-4-carboxamide. It functions in the pathway amino-acid biosynthesis; L-histidine biosynthesis; L-histidine from 5-phospho-alpha-D-ribose 1-diphosphate: step 4/9. This Legionella pneumophila (strain Paris) protein is 1-(5-phosphoribosyl)-5-[(5-phosphoribosylamino)methylideneamino] imidazole-4-carboxamide isomerase.